The following is a 374-amino-acid chain: Type IV secretion system protein PtlG homolog (374 aa).

The chain crosses the membrane as a helical span at residues 38 to 56; the sequence is WMFALVAVALSCLLATGIW. A disordered region spans residues 87–116; the sequence is PREPEPAPLPDMPAAPNPILPQPRPAPPVP. Residues 92-116 show a composition bias toward pro residues; the sequence is PAPLPDMPAAPNPILPQPRPAPPVP.

This sequence belongs to the TrbI/VirB10 family.

The protein resides in the cell membrane. The protein is Type IV secretion system protein PtlG homolog (ptlG) of Bordetella parapertussis (strain 12822 / ATCC BAA-587 / NCTC 13253).